The following is a 388-amino-acid chain: AT-rich binding protein (388 aa).

A C2H2-type 1 zinc finger spans residues 29-52 (IVCHTCQEELQTQDQFWKHIQDEH). Low complexity-rich tracts occupy residues 138-165 (QQHQ…LQQQ) and 249-265 (VSVS…STTP). 2 disordered regions span residues 138–168 (QQHQ…QRDV) and 240–265 (PPPP…STTP). 2 C2H2-type zinc fingers span residues 321–345 (YVCD…RVVH) and 351–374 (FNCE…KKKH).

It is found in the nucleus. In terms of biological role, may be a transcription factor for genes having (A+T) stretches in their promoter and/or enhancer regions. Binds to AT rich DNA. The sequence is that of AT-rich binding protein from Drosophila melanogaster (Fruit fly).